The primary structure comprises 701 residues: DNA ligase (701 aa).

NAD(+)-binding positions include 43-47 (DAAYD), 92-93 (SL), and Glu-126. Lys-128 (N6-AMP-lysine intermediate) is an active-site residue. 4 residues coordinate NAD(+): Arg-149, Glu-186, Lys-302, and Lys-326. Residues Cys-420, Cys-423, Cys-444, and Cys-450 each contribute to the Zn(2+) site. Positions 623–701 (ANDSPVAGKT…EDEWFDLIGA (79 aa)) constitute a BRCT domain.

This sequence belongs to the NAD-dependent DNA ligase family. LigA subfamily. Mg(2+) is required as a cofactor. Requires Mn(2+) as cofactor.

It catalyses the reaction NAD(+) + (deoxyribonucleotide)n-3'-hydroxyl + 5'-phospho-(deoxyribonucleotide)m = (deoxyribonucleotide)n+m + AMP + beta-nicotinamide D-nucleotide.. Functionally, DNA ligase that catalyzes the formation of phosphodiester linkages between 5'-phosphoryl and 3'-hydroxyl groups in double-stranded DNA using NAD as a coenzyme and as the energy source for the reaction. It is essential for DNA replication and repair of damaged DNA. The protein is DNA ligase of Maricaulis maris (strain MCS10) (Caulobacter maris).